The following is a 343-amino-acid chain: Sodium/bile acid cotransporter 7-B (343 aa).

Residues methionine 1–lysine 9 lie on the Cytoplasmic side of the membrane. Residues glutamate 10–glycine 30 traverse the membrane as a helical segment. Residues glutamate 31 to lysine 37 are Extracellular-facing. A helical transmembrane segment spans residues proline 38–leucine 58. At lysine 59–lysine 71 the chain is on the cytoplasmic side. A helical transmembrane segment spans residues leucine 72 to leucine 92. Residues glutamine 93–proline 116 are Extracellular-facing. The helical transmembrane segment at proline 117–phenylalanine 137 threads the bilayer. A topological domain (cytoplasmic) is located at residue asparagine 138. The helical transmembrane segment at serine 139–glycine 159 threads the bilayer. At serine 160–serine 163 the chain is on the extracellular side. A helical membrane pass occupies residues valine 164–glycine 184. At glutamine 185–proline 201 the chain is on the cytoplasmic side. The helical transmembrane segment at phenylalanine 202–phenylalanine 222 threads the bilayer. The Extracellular segment spans residues serine 223–leucine 234. A helical transmembrane segment spans residues valine 235–phenylalanine 255. Residues serine 256 to alanine 270 are Cytoplasmic-facing. A helical transmembrane segment spans residues isoleucine 271 to phenylalanine 291. The Extracellular segment spans residues alanine 292–serine 298. Residues leucine 299–valine 319 traverse the membrane as a helical segment. The Cytoplasmic portion of the chain corresponds to proline 320–leucine 343.

It belongs to the bile acid:sodium symporter (BASS) (TC 2.A.28) family.

Its subcellular location is the cell membrane. The protein resides in the endoplasmic reticulum membrane. It localises to the golgi apparatus membrane. Its function is as follows. Involved in teeth and skeletal development. Has an essential role in the biosynthesis and trafficking of glycosaminoglycans and glycoproteins to produce a proper functioning extracellular matrix. Required for extracellular matrix mineralization. Also involved in the regulation of cellular calcium homeostasis. Does not show transport activity towards bile acids or steroid sulfates. This is Sodium/bile acid cotransporter 7-B (slc10a7-b) from Xenopus laevis (African clawed frog).